A 245-amino-acid chain; its full sequence is Protein mlo1 (245 aa).

The SAP domain maps to 4–38 (YKSLKVAELREKLAEKGLSTAGNKAELVSRLTAAT). Residues 32-245 (SRLTAATESN…AERFGVAAKN (214 aa)) are disordered. Residues 37 to 52 (ATESNDENTSNNNATD) are compositionally biased toward low complexity. A compositionally biased stretch (acidic residues) spans 58–70 (PPEDDIDWGDMEN). Over residues 109 to 118 (TSQAPETSTG) the composition is skewed to polar residues. Residues 119-130 (AEEHQETTEESK) are compositionally biased toward basic and acidic residues. The residue at position 139 (Ser-139) is a Phosphoserine. Over residues 182 to 196 (SSNNKNHNQSKNPQN) the composition is skewed to low complexity.

Belongs to the SAP domain-containing ribonucleoprotein family.

The sequence is that of Protein mlo1 (mlo1) from Schizosaccharomyces pombe (strain 972 / ATCC 24843) (Fission yeast).